The chain runs to 1071 residues: DNA-directed RNA polymerase subunit beta (1071 aa).

The protein belongs to the RNA polymerase beta chain family. As to quaternary structure, in plastids the minimal PEP RNA polymerase catalytic core is composed of four subunits: alpha, beta, beta', and beta''. When a (nuclear-encoded) sigma factor is associated with the core the holoenzyme is formed, which can initiate transcription.

The protein resides in the plastid. It is found in the chloroplast. The enzyme catalyses RNA(n) + a ribonucleoside 5'-triphosphate = RNA(n+1) + diphosphate. In terms of biological role, DNA-dependent RNA polymerase catalyzes the transcription of DNA into RNA using the four ribonucleoside triphosphates as substrates. This Acorus calamus (Sweet flag) protein is DNA-directed RNA polymerase subunit beta.